The sequence spans 104 residues: Salivary protein FS145 (104 aa).

A signal peptide spans 1–18; sequence MKLFAVFLLFCLVNQIYC. 4 cysteine pairs are disulfide-bonded: Cys32-Cys80, Cys62-Cys89, Cys72-Cys100, and Cys76-Cys102. Positions 92–94 match the Putative integrin attachment site; atypical (WGD) motif; sequence WGD.

Interacts with host integrin alpha-V/beta-3 (ITGAV:ITGB3).

The protein localises to the secreted. Functionally, inhibits proliferation, adhesion and migration of host cells as well as host angiogenesis by blocking host integrin alpha-V/beta-3 (ITGAV:ITGB3). The sequence is that of Salivary protein FS145 from Xenopsylla cheopis (Oriental rat flea).